Here is a 480-residue protein sequence, read N- to C-terminus: UDP-glucose 6-dehydrogenase 4 (480 aa).

NAD(+) contacts are provided by residues 3–20, Asp33, Arg38, Thr90, Thr128, and Glu161; that span reads KICC…MAVI. Residues 157–161, Lys216, 216–223, 256–269, and Gly269 each bind substrate; these read EFLAE, KLAANAFL, and RIGS…VGFG. The active-site Nucleophile is Cys272. An NAD(+)-binding site is contributed by Lys275. 2 residues coordinate substrate: Phe334 and Lys335. Residue Arg342 coordinates NAD(+). Arg447 contributes to the substrate binding site.

The protein belongs to the UDP-glucose/GDP-mannose dehydrogenase family.

It carries out the reaction UDP-alpha-D-glucose + 2 NAD(+) + H2O = UDP-alpha-D-glucuronate + 2 NADH + 3 H(+). The protein operates within nucleotide-sugar biosynthesis; UDP-alpha-D-glucuronate biosynthesis; UDP-alpha-D-glucuronate from UDP-alpha-D-glucose: step 1/1. With respect to regulation, inhibited by UDP-xylose. Involved in the biosynthesis of UDP-glucuronic acid (UDP-GlcA), providing nucleotide sugars for cell-wall polymers. The protein is UDP-glucose 6-dehydrogenase 4 of Arabidopsis thaliana (Mouse-ear cress).